We begin with the raw amino-acid sequence, 75 residues long: Small ribosomal subunit protein bS18 (75 aa).

The protein belongs to the bacterial ribosomal protein bS18 family. Part of the 30S ribosomal subunit. Forms a tight heterodimer with protein bS6.

In terms of biological role, binds as a heterodimer with protein bS6 to the central domain of the 16S rRNA, where it helps stabilize the platform of the 30S subunit. This is Small ribosomal subunit protein bS18 from Psychrobacter sp. (strain PRwf-1).